Here is a 288-residue protein sequence, read N- to C-terminus: S-methyl-5'-thioadenosine phosphorylase (288 aa).

Residues Ser10, 52–53 (RH), and 85–86 (TA) each bind phosphate. Met188 is a substrate binding site. Thr189 lines the phosphate pocket. 212–214 (DYD) lines the substrate pocket.

It belongs to the PNP/MTAP phosphorylase family. MTAP subfamily. As to quaternary structure, homotrimer.

It localises to the cytoplasm. The protein localises to the nucleus. It catalyses the reaction S-methyl-5'-thioadenosine + phosphate = 5-(methylsulfanyl)-alpha-D-ribose 1-phosphate + adenine. Its pathway is amino-acid biosynthesis; L-methionine biosynthesis via salvage pathway; S-methyl-5-thio-alpha-D-ribose 1-phosphate from S-methyl-5'-thioadenosine (phosphorylase route): step 1/1. Its function is as follows. Catalyzes the reversible phosphorylation of S-methyl-5'-thioadenosine (MTA) to adenine and 5-methylthioribose-1-phosphate. Involved in the breakdown of MTA, a major by-product of polyamine biosynthesis. Responsible for the first step in the methionine salvage pathway after MTA has been generated from S-adenosylmethionine. Has broad substrate specificity with 6-aminopurine nucleosides as preferred substrates. The chain is S-methyl-5'-thioadenosine phosphorylase from Caenorhabditis elegans.